Consider the following 219-residue polypeptide: Envelope protein US9 homolog (219 aa).

The Intravirion segment spans residues 1–193 (MEKAEAAAVV…RHRRRRVALT (193 aa)). The Di-leucine internalization motif motif lies at 145–146 (LL). Residues 153 to 168 (DYDSESGCYYSESDNE) are acidic. Serine 163 and serine 165 each carry phosphoserine; by host CK2. A helical; Signal-anchor for type II membrane protein membrane pass occupies residues 194–214 (VAGVILVVVLCAISGIVGAFL). The Virion surface segment spans residues 215–219 (ARVFP).

This sequence belongs to the alphaherpesvirinae envelope protein US9 family. Phosphorylated on serines within the acidic cluster. Phosphorylation determines whether endocytosed viral US9 traffics to the trans-Golgi network or recycles to the cell membrane.

It is found in the virion membrane. Its subcellular location is the host Golgi apparatus membrane. The protein resides in the host smooth endoplasmic reticulum membrane. The protein localises to the host cell membrane. Its function is as follows. Essential for the anterograde spread of the infection throughout the host nervous system. Together with the gE/gI heterodimer, US9 is involved in the sorting and transport of viral structural components toward axon tips. In Equine herpesvirus 1 (strain Ab4p) (EHV-1), this protein is Envelope protein US9 homolog.